Reading from the N-terminus, the 77-residue chain is U8-lycotoxin-Ls1i (77 aa).

The N-terminal stretch at 1 to 20 (MKLIIFTGLVLFAIVSLIEV) is a signal peptide. The propeptide occupies 21-26 (QADNER).

This sequence belongs to the neurotoxin 19 (CSTX) family. 08 (U8-Lctx) subfamily. Post-translationally, contains 4 disulfide bonds. As to expression, expressed by the venom gland.

The protein localises to the secreted. This Lycosa singoriensis (Wolf spider) protein is U8-lycotoxin-Ls1i.